A 483-amino-acid polypeptide reads, in one-letter code: Isocitrate dehydrogenase [NADP] (483 aa).

Threonine 74 contributes to the NADP(+) binding site. Positions 83, 85, 89, 99, and 121 each coordinate D-threo-isocitrate. A Mg(2+)-binding site is contributed by aspartate 232. Residues 264–270 (HGSAPDI) and asparagine 277 contribute to the NADP(+) site.

This sequence belongs to the isocitrate and isopropylmalate dehydrogenases family. Homodimer. Requires Mg(2+) as cofactor. It depends on Mn(2+) as a cofactor.

It carries out the reaction D-threo-isocitrate + NADP(+) = 2-oxoglutarate + CO2 + NADPH. Functionally, catalyzes the oxidative decarboxylation of isocitrate to 2-oxoglutarate and carbon dioxide with the concomitant reduction of NADP(+). The sequence is that of Isocitrate dehydrogenase [NADP] (icd) from Rickettsia felis (strain ATCC VR-1525 / URRWXCal2) (Rickettsia azadi).